The chain runs to 184 residues: Photosystem I assembly protein Ycf4 (184 aa).

The next 2 helical transmembrane spans lie at 22 to 42 (FCWA…GTSS) and 57 to 77 (IIFF…LFIS).

This sequence belongs to the Ycf4 family.

It localises to the plastid. The protein resides in the chloroplast thylakoid membrane. Functionally, seems to be required for the assembly of the photosystem I complex. The polypeptide is Photosystem I assembly protein Ycf4 (Crucihimalaya wallichii (Rock-cress)).